Here is a 263-residue protein sequence, read N- to C-terminus: Rhomboid-like protease 3 (263 aa).

The next 6 helical transmembrane spans lie at 37-57 (KSIV…CVLS), 86-106 (VVTP…LVFI), 121-141 (KFLV…MLMQ), 142-162 (PWAL…GMAA), 189-209 (LIYF…GGFL), and 231-251 (VLFY…PPLL). Catalysis depends on Ser-150, which acts as the Nucleophile. Residue His-204 is part of the active site.

Belongs to the peptidase S54 family.

Its subcellular location is the membrane. It catalyses the reaction Cleaves type-1 transmembrane domains using a catalytic dyad composed of serine and histidine that are contributed by different transmembrane domains.. In terms of biological role, serine protease involved in intramembrane proteolysis and the subsequent release of polypeptides from their membrane anchors. In Toxoplasma gondii, this protein is Rhomboid-like protease 3 (ROM3).